The sequence spans 200 residues: Protein GrpE (200 aa).

Residues 1-23 are compositionally biased toward acidic residues; that stretch reads MEEEIKETSEDKEEENTEAEAVE. The segment at 1–39 is disordered; the sequence is MEEEIKETSEDKEEENTEAEAVENNEKSEENAGNVEEDE.

Belongs to the GrpE family. As to quaternary structure, homodimer.

Its subcellular location is the cytoplasm. Functionally, participates actively in the response to hyperosmotic and heat shock by preventing the aggregation of stress-denatured proteins, in association with DnaK and GrpE. It is the nucleotide exchange factor for DnaK and may function as a thermosensor. Unfolded proteins bind initially to DnaJ; upon interaction with the DnaJ-bound protein, DnaK hydrolyzes its bound ATP, resulting in the formation of a stable complex. GrpE releases ADP from DnaK; ATP binding to DnaK triggers the release of the substrate protein, thus completing the reaction cycle. Several rounds of ATP-dependent interactions between DnaJ, DnaK and GrpE are required for fully efficient folding. This Brachyspira hyodysenteriae (strain ATCC 49526 / WA1) protein is Protein GrpE.